The primary structure comprises 373 residues: Glutamate 5-kinase (373 aa).

ATP is bound at residue Lys16. Substrate is bound by residues Ser56, Asp143, and Asn155. 175-176 (TD) contacts ATP. In terms of domain architecture, PUA spans 281–359 (RGRLTLDDGA…SRIDSLLGYK (79 aa)).

Belongs to the glutamate 5-kinase family.

Its subcellular location is the cytoplasm. It catalyses the reaction L-glutamate + ATP = L-glutamyl 5-phosphate + ADP. It functions in the pathway amino-acid biosynthesis; L-proline biosynthesis; L-glutamate 5-semialdehyde from L-glutamate: step 1/2. Its function is as follows. Catalyzes the transfer of a phosphate group to glutamate to form L-glutamate 5-phosphate. The protein is Glutamate 5-kinase of Saccharophagus degradans (strain 2-40 / ATCC 43961 / DSM 17024).